Reading from the N-terminus, the 280-residue chain is Shikimate dehydrogenase (NADP(+)) (280 aa).

Shikimate is bound by residues 20-22 (SLS) and Thr-67. The Proton acceptor role is filled by Lys-71. Residue Glu-83 coordinates NADP(+). The shikimate site is built by Asn-92 and Asp-107. NADP(+) is bound by residues 131-135 (GAGGA), 155-160 (NRTLNK), and Leu-224. Tyr-226 serves as a coordination point for shikimate. An NADP(+)-binding site is contributed by Gly-247.

This sequence belongs to the shikimate dehydrogenase family. As to quaternary structure, homodimer.

The catalysed reaction is shikimate + NADP(+) = 3-dehydroshikimate + NADPH + H(+). It functions in the pathway metabolic intermediate biosynthesis; chorismate biosynthesis; chorismate from D-erythrose 4-phosphate and phosphoenolpyruvate: step 4/7. In terms of biological role, involved in the biosynthesis of the chorismate, which leads to the biosynthesis of aromatic amino acids. Catalyzes the reversible NADPH linked reduction of 3-dehydroshikimate (DHSA) to yield shikimate (SA). This is Shikimate dehydrogenase (NADP(+)) from Caldanaerobacter subterraneus subsp. tengcongensis (strain DSM 15242 / JCM 11007 / NBRC 100824 / MB4) (Thermoanaerobacter tengcongensis).